The primary structure comprises 445 residues: Adenylyltransferase and sulfurtransferase MOCS3 (445 aa).

A disordered region spans residues 49–70; it reads LPPSAAAEVEPTGSPSSSSSAA. Residues G106, D127, 134 to 138, K151, and 170 to 171 each bind ATP; these read DNLHR and NN. C211 and C214 together coordinate Zn(2+). The active-site Glycyl thioester intermediate; for adenylyltransferase activity is the C228. Residues C286 and C289 each contribute to the Zn(2+) site. Positions 342-443 constitute a Rhodanese domain; that stretch reads SGRPHLLVDV…WAKEVDPSFL (102 aa). C403 (cysteine persulfide intermediate; for sulfurtransferase activity) is an active-site residue.

The protein in the N-terminal section; belongs to the HesA/MoeB/ThiF family. UBA4 subfamily. Zn(2+) serves as cofactor.

The protein resides in the cytoplasm. The protein localises to the cytosol. The catalysed reaction is [molybdopterin-synthase sulfur-carrier protein]-C-terminal Gly-Gly + ATP + H(+) = [molybdopterin-synthase sulfur-carrier protein]-C-terminal Gly-Gly-AMP + diphosphate. It catalyses the reaction [molybdopterin-synthase sulfur-carrier protein]-C-terminal Gly-Gly-AMP + S-sulfanyl-L-cysteinyl-[cysteine desulfurase] + AH2 = [molybdopterin-synthase sulfur-carrier protein]-C-terminal-Gly-aminoethanethioate + L-cysteinyl-[cysteine desulfurase] + A + AMP + 2 H(+). It participates in tRNA modification; 5-methoxycarbonylmethyl-2-thiouridine-tRNA biosynthesis. It functions in the pathway cofactor biosynthesis; molybdopterin biosynthesis. Its function is as follows. Plays a central role in 2-thiolation of mcm(5)S(2)U at tRNA wobble positions of cytosolic tRNA(Lys), tRNA(Glu) and tRNA(Gln). Also essential during biosynthesis of the molybdenum cofactor. Acts by mediating the C-terminal thiocarboxylation of sulfur carriers URM1 and MOCS2A. Its N-terminus first activates URM1 and MOCS2A as acyl-adenylates (-COAMP), then the persulfide sulfur on the catalytic cysteine is transferred to URM1 and MOCS2A to form thiocarboxylation (-COSH) of their C-terminus. The reaction probably involves hydrogen sulfide that is generated from the persulfide intermediate and that acts as a nucleophile towards URM1 and MOCS2A. Subsequently, a transient disulfide bond is formed. Does not use thiosulfate as sulfur donor; NFS1 probably acting as a sulfur donor for thiocarboxylation reactions. In Oryza sativa subsp. japonica (Rice), this protein is Adenylyltransferase and sulfurtransferase MOCS3.